We begin with the raw amino-acid sequence, 260 residues long: MAFVPPQAGYDRAITVFSPDGRLFQVNYAREAVKRGATAVGVKCKDGVVLAVEKRITSRLIEPESYEKIFQIDDHIAAASSGIIADARVLVNRARLEAQIHRLTYGEPAPLAVIVKKICDLKQMHTQYGGVRPFGAALLMAGVNDKPELYETDPSGAYFAWKAVAIGSGRNTAMAIFEDKYRDDMTLDEAIKLAIFALAKTMEKPSAENIEVAVITVKDKKFRKLSKEEIEKFLGEVMKEVEEEEVKEKEEDYSELDSHY.

Belongs to the peptidase T1A family. The 20S proteasome core is composed of 14 alpha and 14 beta subunits that assemble into four stacked heptameric rings, resulting in a barrel-shaped structure. The two inner rings, each composed of seven catalytic beta subunits, are sandwiched by two outer rings, each composed of seven alpha subunits. The catalytic chamber with the active sites is on the inside of the barrel. Has a gated structure, the ends of the cylinder being occluded by the N-termini of the alpha-subunits. Is capped at one or both ends by the proteasome regulatory ATPase, PAN.

It is found in the cytoplasm. Its activity is regulated as follows. The formation of the proteasomal ATPase PAN-20S proteasome complex, via the docking of the C-termini of PAN into the intersubunit pockets in the alpha-rings, triggers opening of the gate for substrate entry. Interconversion between the open-gate and close-gate conformations leads to a dynamic regulation of the 20S proteasome proteolysis activity. Component of the proteasome core, a large protease complex with broad specificity involved in protein degradation. The chain is Proteasome subunit alpha from Pyrococcus abyssi (strain GE5 / Orsay).